A 114-amino-acid polypeptide reads, in one-letter code: Large ribosomal subunit protein bL20c (114 aa).

Belongs to the bacterial ribosomal protein bL20 family.

The protein resides in the plastid. Its function is as follows. Binds directly to 23S ribosomal RNA and is necessary for the in vitro assembly process of the 50S ribosomal subunit. It is not involved in the protein synthesizing functions of that subunit. The protein is Large ribosomal subunit protein bL20c of Prototheca wickerhamii.